A 333-amino-acid chain; its full sequence is uncharacterized protein (333 aa).

This is an uncharacterized protein from Mycolicibacterium smegmatis (Mycobacterium smegmatis).